We begin with the raw amino-acid sequence, 331 residues long: Phosphatidylinositol transfer protein 4 (331 aa).

It belongs to the PtdIns transfer protein family. PI transfer class IIA subfamily.

Its function is as follows. Catalyzes the transfer of PtdIns and phosphatidylcholine between membranes. The polypeptide is Phosphatidylinositol transfer protein 4 (pitD) (Dictyostelium discoideum (Social amoeba)).